The primary structure comprises 474 residues: PRAME family member 13 (474 aa).

The stretch at 97 to 124 (RRKLQVLDLRDVDENFWARWPGAWALSC) is one LRR 1; degenerate repeat. One copy of the LRR 2; degenerate repeat lies at 179–203 (HLCCSKLVNYLTPIKHLRKSLKIIY). The LRR 3; degenerate repeat unit spans residues 204–230 (LNSIQELEIHNMSWPRLIRKLRCYLKE). The stretch at 231-265 (MKTLGKLVFSRCHHSTSDNELEGRLVTKFSSVFLG) is one LRR 4; degenerate repeat. 5 LRR repeats span residues 266 to 291 (LEHL…IRCL), 292 to 323 (QNPL…GYLK), 324 to 342 (HLNL…PLGA), 348 to 375 (AASL…GLSR), and 376 to 400 (CSQL…LLRH).

The protein belongs to the PRAME family.

This chain is PRAME family member 13, found in Homo sapiens (Human).